We begin with the raw amino-acid sequence, 299 residues long: Transcription elongation factor A protein 2 (299 aa).

The TFIIS N-terminal domain occupies 6–83 (EEIARIARRL…KSWKKLLDAS (78 aa)). Residue Lys-58 forms a Glycyl lysine isopeptide (Lys-Gly) (interchain with G-Cter in ubiquitin) linkage. A phosphoserine mark is found at Ser-60 and Ser-100. The tract at residues 86-128 (KARERGRGMPLPTSSRDASEAPDPSRKRPELPRAPSTPRITTF) is disordered. Over residues 102 to 116 (DASEAPDPSRKRPEL) the composition is skewed to basic and acidic residues. Residues 138 to 254 (VRNKCREMLT…EHQMARTGGT (117 aa)) enclose the TFIIS central domain. The TFIIS-type zinc finger occupies 257 to 297 (DLFTCGKCRKKNCTYTQVQTRSSDEPMTTFVVCNECGNRWK). Positions 261, 264, 289, and 292 each coordinate Zn(2+).

This sequence belongs to the TFS-II family. Interacts with the basal transcription factor GTF2B. Interacts with REXO1. In terms of tissue distribution, testis and ovary specific.

The protein resides in the nucleus. Necessary for efficient RNA polymerase II transcription elongation past template-encoded arresting sites. The arresting sites in DNA have the property of trapping a certain fraction of elongating RNA polymerases that pass through, resulting in locked ternary complexes. Cleavage of the nascent transcript by S-II allows the resumption of elongation from the new 3'-terminus. This Homo sapiens (Human) protein is Transcription elongation factor A protein 2 (TCEA2).